The chain runs to 379 residues: Pentatricopeptide repeat-containing protein At3g25210, mitochondrial (379 aa).

6 PPR repeats span residues 142–177 (SVPLYNCIIRFCCGRKFLFNRAFDVYNKMLRSDDSK), 179–221 (DLET…GVIP), 222–256 (DTFVLNMIIKAYAKCLEVDEAIRVFKEMALYGSEP), 257–291 (NAYTYSYLVKGVCEKGRVGQGLGFYKEMQVKGMVP), 292–326 (NGSCYMVLICSLSMERRLDEAVEVVYDMLANSLSP), and 327–361 (DMLTYNTVLTELCRGGRGSEALEMVEEWKKRDPVM).

It belongs to the PPR family. P subfamily.

The protein localises to the mitochondrion. The chain is Pentatricopeptide repeat-containing protein At3g25210, mitochondrial from Arabidopsis thaliana (Mouse-ear cress).